Reading from the N-terminus, the 142-residue chain is Immunoglobulin iota chain (142 aa).

An N-terminal signal peptide occupies residues 1–19; sequence MAWTSVLLMLLAYLTGCGP. Residues 20-41 are framework-1; the sequence is QPMVHQPPLASSSLGATIRLSC. A disulfide bridge connects residues cysteine 41 and cysteine 115. Residues 42–56 form a complementarity-determining-1 region; that stretch reads TLSNDHNIGIYSIYW. The interval 57–70 is framework-2; it reads YQQRPGHPPRFLLR. The tract at residues 71 to 81 is complementarity-determining-2; that stretch reads YFSHSDKHQGP. The framework-3 stretch occupies residues 82-115; sequence DIPPRFSGSKDTTRNLGYLSISELQPEDEAVYYC.

It belongs to the immunoglobulin superfamily. As to quaternary structure, interacts with IGLL1. Interacts with SYNV1/HRD1 (via N-terminus); this interaction leads to increased VPREB1A ubiquitination and degradation in pre-B cells, possibly through a lysosomal, not proteasomal, pathway. In terms of tissue distribution, only expressed by pre-B-cells.

It localises to the endoplasmic reticulum. Its function is as follows. Associates with the Ig-mu chain to form a molecular complex that is expressed on the surface of pre-B-cells. This complex presumably regulates Ig gene rearrangements in the early steps of B-cell differentiation. In Mus musculus (Mouse), this protein is Immunoglobulin iota chain.